Here is a 197-residue protein sequence, read N- to C-terminus: Inner membrane protein RclC (197 aa).

Over 1 to 15 the chain is Periplasmic; the sequence is MEKYLHLLSRGDKIG. A helical membrane pass occupies residues 16-36; that stretch reads LTLIRLSIAIVFMWIGLLKFV. Topologically, residues 37 to 85 are cytoplasmic; it reads PYEADSITPFVANSPLMSFFYEHPEDYKQYLTHEGEYKPEARAWQTANN. Residues 86–106 form a helical membrane-spanning segment; the sequence is TYGFSNGLGVVEVIIALLVLA. Residues 107 to 112 are Periplasmic-facing; that stretch reads NPVNRW. A helical membrane pass occupies residues 113 to 133; the sequence is LGLLGGLMAFTTPLVTLSFLI. Residues 134-197 lie on the Cytoplasmic side of the membrane; it reads TTPEAWVPAL…ESSSTLKTEY (64 aa).

The protein localises to the cell inner membrane. Its function is as follows. Probably involved in reactive chlorine species (RCS) stress resistance. The sequence is that of Inner membrane protein RclC (rclC) from Escherichia coli (strain K12).